Reading from the N-terminus, the 255-residue chain is Imidazole glycerol phosphate synthase subunit HisF (255 aa).

Catalysis depends on residues Asp12 and Asp131.

Belongs to the HisA/HisF family. In terms of assembly, heterodimer of HisH and HisF.

The protein localises to the cytoplasm. It carries out the reaction 5-[(5-phospho-1-deoxy-D-ribulos-1-ylimino)methylamino]-1-(5-phospho-beta-D-ribosyl)imidazole-4-carboxamide + L-glutamine = D-erythro-1-(imidazol-4-yl)glycerol 3-phosphate + 5-amino-1-(5-phospho-beta-D-ribosyl)imidazole-4-carboxamide + L-glutamate + H(+). Its pathway is amino-acid biosynthesis; L-histidine biosynthesis; L-histidine from 5-phospho-alpha-D-ribose 1-diphosphate: step 5/9. Functionally, IGPS catalyzes the conversion of PRFAR and glutamine to IGP, AICAR and glutamate. The HisF subunit catalyzes the cyclization activity that produces IGP and AICAR from PRFAR using the ammonia provided by the HisH subunit. This chain is Imidazole glycerol phosphate synthase subunit HisF, found in Ignicoccus hospitalis (strain KIN4/I / DSM 18386 / JCM 14125).